A 299-amino-acid chain; its full sequence is Protease HtpX homolog (299 aa).

2 helical membrane-spanning segments follow: residues 5–25 (IFLFILTNILVITTIGIVLSV) and 44–64 (MVALLVFSAVVGFVGSFMSLA). His-155 is a binding site for Zn(2+). Glu-156 is an active-site residue. His-159 provides a ligand contact to Zn(2+). Helical transmembrane passes span 170–190 (LLQGIVNTFVVFLSRIAAWIA) and 205–225 (FIAVIVFQIIFSVLGSLVVFA). Residue Glu-231 participates in Zn(2+) binding.

The protein belongs to the peptidase M48B family. It depends on Zn(2+) as a cofactor.

It is found in the cell membrane. The protein is Protease HtpX homolog of Bacillus pumilus (strain SAFR-032).